The following is a 370-amino-acid chain: Gap junction delta-4 protein (370 aa).

The Cytoplasmic portion of the chain corresponds to 1 to 19 (MEGVDLLGFLIITLNCNVT). A helical membrane pass occupies residues 20–40 (MVGKLWFVLTMLLRMLVIVLA). The Extracellular portion of the chain corresponds to 41-76 (GRPVYQDEQERFVCNTLQPGCANVCYDVFSPVSHLR). A helical transmembrane segment spans residues 77 to 97 (FWLIQGVCVLLPSAVFSVYVL). Topologically, residues 98 to 146 (HRGATLAALGPRRCPDPREPASGQRRCPRPFGERGGLQVPDFSAGYIIH) are cytoplasmic. The chain crosses the membrane as a helical span at residues 147–167 (LLLRTLLEAAFGALHYFLFGF). Over 168–196 (LAPKKFPCTRPPCTGVVDCYVSRPTEKSL) the chain is Extracellular. Residues 197 to 217 (LMLFLWAVSALSFLLGLADLV) form a helical membrane-spanning segment. Residues 218 to 370 (CSLRRRMRRR…HLRARKSEWV (153 aa)) lie on the Cytoplasmic side of the membrane. Residues 224–370 (MRRRPGPPTS…HLRARKSEWV (147 aa)) are disordered. The span at 246 to 260 (AEGRRTDEEGGREEE) shows a compositional bias: basic and acidic residues. The segment covering 331–346 (PSAAPSRLAAPPSCSS) has biased composition (low complexity).

This sequence belongs to the connexin family. Delta-type subfamily. As to quaternary structure, a connexon is composed of a hexamer of connexins. Expressed in pancreas, kidney, skeletal muscle, liver, placenta, and heart.

It localises to the cell membrane. Its subcellular location is the cell junction. The protein localises to the gap junction. One gap junction consists of a cluster of closely packed pairs of transmembrane channels, the connexons, through which materials of low MW diffuse from one cell to a neighboring cell. This chain is Gap junction delta-4 protein (GJD4), found in Homo sapiens (Human).